The chain runs to 349 residues: uncharacterized protein (349 aa).

The helical transmembrane segment at 16 to 36 (LVITIISTGLIFGMTLVLTGL) threads the bilayer. The interval 111-139 (FGAPEHGPGMPRVSEGRSPSKPDEVAASS) is disordered. Residues 124-134 (SEGRSPSKPDE) show a composition bias toward basic and acidic residues. A run of 3 helical transmembrane segments spans residues 231 to 251 (ISIV…SVVY), 284 to 304 (VIAL…APLF), and 307 to 327 (IVAV…VIGL).

It belongs to the ABC-4 integral membrane protein family. As to quaternary structure, the complex is composed of two ATP-binding proteins (MT0079), two transmembrane proteins (MT0078) and a solute-binding protein.

It is found in the cell membrane. Its function is as follows. Probably part of an ABC transporter complex. Probably responsible for the translocation of the substrate across the membrane. This is an uncharacterized protein from Mycobacterium tuberculosis (strain CDC 1551 / Oshkosh).